The primary structure comprises 332 residues: 2,7-dihydroxy-5-methyl-1-naphthoate 7-O-methyltransferase (332 aa).

Substrate is bound at residue Arg-11. S-adenosyl-L-methionine contacts are provided by residues Trp-133, His-153, 175 to 179, Gly-177, Asp-200, 227 to 228, and 242 to 243; these read DVGGG, SF, and SA. Catalysis depends on His-246, which acts as the Proton acceptor. Substrate is bound at residue Asp-247.

The protein belongs to the class I-like SAM-binding methyltransferase superfamily. Cation-independent O-methyltransferase family.

It carries out the reaction 2,7-dihydroxy-5-methyl-1-naphthoate + S-adenosyl-L-methionine = 2-hydroxy-7-methoxy-5-methyl-1-naphthoate + S-adenosyl-L-homocysteine + H(+). Its pathway is antibiotic biosynthesis. Its function is as follows. S-adenosyl-L-methionine-dependent O-methyltransferase that catalyzes regiospecific methylation at the 7-hydroxy group of 2,7-dihydroxy-5-methyl-1-naphthoate in the biosynthesis of the naphthoate moiety of the neocarzinostatin chromophore. Also recognizes other dihydroxynaphthoate as substrates and catalyzes their regiospecific O-methylation. The carboxylate and its ortho-hydroxy groups of the substrate appear to be crucial for NcsB1 substrate recognition and binding, and O-methylation takes place only at the free hydroxy group of these dihydroxynaphthoic acids. The protein is 2,7-dihydroxy-5-methyl-1-naphthoate 7-O-methyltransferase of Streptomyces carzinostaticus.